Here is a 341-residue protein sequence, read N- to C-terminus: Biotin synthase (341 aa).

Residues 40–267 (AEIQVSTLLS…RSMVRLSAGR (228 aa)) form the Radical SAM core domain. [4Fe-4S] cluster is bound by residues C55, C59, and C62. Residues C99, C130, C190, and R262 each contribute to the [2Fe-2S] cluster site.

It belongs to the radical SAM superfamily. Biotin synthase family. In terms of assembly, homodimer. The cofactor is [4Fe-4S] cluster. [2Fe-2S] cluster is required as a cofactor.

It catalyses the reaction (4R,5S)-dethiobiotin + (sulfur carrier)-SH + 2 reduced [2Fe-2S]-[ferredoxin] + 2 S-adenosyl-L-methionine = (sulfur carrier)-H + biotin + 2 5'-deoxyadenosine + 2 L-methionine + 2 oxidized [2Fe-2S]-[ferredoxin]. The protein operates within cofactor biosynthesis; biotin biosynthesis; biotin from 7,8-diaminononanoate: step 2/2. Its function is as follows. Catalyzes the conversion of dethiobiotin (DTB) to biotin by the insertion of a sulfur atom into dethiobiotin via a radical-based mechanism. This is Biotin synthase from Xylella fastidiosa (strain M23).